The chain runs to 331 residues: Ribosomal RNA small subunit methyltransferase H (331 aa).

S-adenosyl-L-methionine is bound by residues Gly-48–His-50, Asp-67, Asp-115, and Gln-122. The segment at Arg-297–Ala-331 is disordered. Residues Gly-298–Arg-312 show a composition bias toward basic and acidic residues.

This sequence belongs to the methyltransferase superfamily. RsmH family.

Its subcellular location is the cytoplasm. It catalyses the reaction cytidine(1402) in 16S rRNA + S-adenosyl-L-methionine = N(4)-methylcytidine(1402) in 16S rRNA + S-adenosyl-L-homocysteine + H(+). Functionally, specifically methylates the N4 position of cytidine in position 1402 (C1402) of 16S rRNA. This Micrococcus luteus (strain ATCC 4698 / DSM 20030 / JCM 1464 / CCM 169 / CCUG 5858 / IAM 1056 / NBRC 3333 / NCIMB 9278 / NCTC 2665 / VKM Ac-2230) (Micrococcus lysodeikticus) protein is Ribosomal RNA small subunit methyltransferase H.